Reading from the N-terminus, the 181-residue chain is Inner kinetochore subunit MCM16 (181 aa).

A coiled-coil region spans residues 112 to 171 (KQLIESRAERDELMSKLIELSSKFPKPTIPPDDSDTAGKQVEVEKENETIQELMIALQIH).

Belongs to the CENP-H/MCM16 family. In terms of assembly, component of the heterotrimeric kinetochore subcomplex CTF3, which consists of CTF3, MCM16 and MCM22. The CTF3 subcomplex is part of a larger constitutive centromere-associated network (CCAN) (also known as central kinetochore CTF19 complex in yeast), which is composed of at least AME1, CHL4, CNN1, CTF3, CTF19, IML3, MCM16, MCM21, MCM22, MHF1, MHF2, MIF2, NKP1, NKP2, OKP1 and WIP1. Interacts with CTF19.

It is found in the nucleus. The protein localises to the chromosome. It localises to the centromere. The protein resides in the kinetochore. Its function is as follows. Component of the kinetochore, a multiprotein complex that assembles on centromeric DNA and attaches chromosomes to spindle microtubules, mediating chromosome segregation and sister chromatid segregation during meiosis and mitosis. Component of the inner kinetochore constitutive centromere-associated network (CCAN), which serves as a structural platform for outer kinetochore assembly. This is Inner kinetochore subunit MCM16 (MCM16) from Saccharomyces cerevisiae (strain ATCC 204508 / S288c) (Baker's yeast).